Reading from the N-terminus, the 346-residue chain is Nucleoplasmin-like protein ANO39 (346 aa).

The residue at position 2 (serine 2) is an N-acetylserine. Asparagine 85 carries N-linked (GlcNAc...) asparagine glycosylation. Acidic residues predominate over residues 123 to 141 (DEEELEEDDEEEEEEDEVE). The disordered stretch occupies residues 123–285 (DEEELEEDDE…KAKAKTDTKL (163 aa)). Serine 145 is modified (phosphoserine; by CDC2). Residues 171 to 180 (AKLDKDADKK) show a composition bias toward basic and acidic residues. Positions 181 to 247 (EDDDEEEDDE…EEEEDEDEES (67 aa)) are enriched in acidic residues. Asparagine 264 carries N-linked (GlcNAc...) asparagine glycosylation. The span at 271–285 (GDNKPKAKAKTDTKL) shows a compositional bias: basic and acidic residues.

Belongs to the nucleoplasmin family. Post-translationally, phosphorylation occurs in oocytes during the progression of the first meiotic M phase. No phosphorylation is observed in immature oocytes. In terms of tissue distribution, expressed specifically in the oocytes of the ovaries.

It localises to the nucleus. The protein localises to the nucleolus. Its subcellular location is the cytoplasm. Functionally, binds double-stranded RNA and both single-stranded and double-stranded DNA. In Patiria pectinifera (Starfish), this protein is Nucleoplasmin-like protein ANO39.